A 65-amino-acid chain; its full sequence is Large ribosomal subunit protein bL35 (65 aa).

3 stretches are compositionally biased toward basic residues: residues 1–18 (MPKM…KRTA), 31–44 (HRFH…RRQL), and 55–65 (VKRYKKMIPAK). The tract at residues 1–65 (MPKMKTKSAA…KRYKKMIPAK (65 aa)) is disordered.

Belongs to the bacterial ribosomal protein bL35 family.

The polypeptide is Large ribosomal subunit protein bL35 (Limosilactobacillus fermentum (strain NBRC 3956 / LMG 18251) (Lactobacillus fermentum)).